Consider the following 399-residue polypeptide: Tryptophan synthase beta chain (399 aa).

Lysine 91 carries the post-translational modification N6-(pyridoxal phosphate)lysine.

It belongs to the TrpB family. Tetramer of two alpha and two beta chains. It depends on pyridoxal 5'-phosphate as a cofactor.

It catalyses the reaction (1S,2R)-1-C-(indol-3-yl)glycerol 3-phosphate + L-serine = D-glyceraldehyde 3-phosphate + L-tryptophan + H2O. It functions in the pathway amino-acid biosynthesis; L-tryptophan biosynthesis; L-tryptophan from chorismate: step 5/5. The beta subunit is responsible for the synthesis of L-tryptophan from indole and L-serine. This Shouchella clausii (strain KSM-K16) (Alkalihalobacillus clausii) protein is Tryptophan synthase beta chain.